Consider the following 1014-residue polypeptide: Latrophilin-like protein 1 (1014 aa).

The signal sequence occupies residues 1–27; it reads MRRNKTTYSLLQTILVACLLTVTPTFA. The N-linked (GlcNAc...) asparagine glycan is linked to asparagine 4. At 28–555 the chain is on the extracellular side; sequence SNKPTTDESG…IDQTLLTLLT (528 aa). Residues 43–134 enclose the SUEL-type lectin domain; sequence ICDGEAAELS…KYLEVKYNCV (92 aa). The region spanning 359 to 542 is the GAIN-B domain; it reads ESNVIVQPAI…AVLMDVRGHD (184 aa). Residues asparagine 473 and asparagine 518 are each glycosylated (N-linked (GlcNAc...) asparagine). 2 cysteine pairs are disulfide-bonded: cysteine 497-cysteine 524 and cysteine 512-cysteine 526. The tract at residues 497-542 is GPS; the sequence is CVWWNHHELKWKPSGCKLSYHNKTMTSCDCTHLTHFAVLMDVRGHD. Residues 556–576 form a helical membrane-spanning segment; it reads YVGCIISIICLLLTFFAYLIF. Residues 577-584 lie on the Cytoplasmic side of the membrane; it reads SRNGGDRV. The chain crosses the membrane as a helical span at residues 585-605; sequence FIHENLCLSLAIAEITFLAGI. The Extracellular segment spans residues 606–613; the sequence is TRTEDSLQ. The chain crosses the membrane as a helical span at residues 614–634; that stretch reads CGIIAVALMYMFLSALTWMLL. Over 635–653 the chain is Cytoplasmic; that stretch reads EGYHIHRMLTEVFPSDPRR. A helical transmembrane segment spans residues 654 to 674; that stretch reads FTYLLVGYIPPAIITLVAYLY. The Extracellular portion of the chain corresponds to 675 to 692; it reads NSDGFGTPDHCWLSTQNN. The helical transmembrane segment at 693–713 threads the bilayer; that stretch reads FIWFFAGPACFIFCANSLVLV. The Cytoplasmic segment spans residues 714 to 745; the sequence is KTLCTVYQHTSGGYLPCRHDVDSGRSIRNWVK. Residues 746–766 traverse the membrane as a helical segment; sequence GSLALASLLGVTWIFGLFWVE. Over 767–770 the chain is Extracellular; sequence DSRS. Residues 771 to 791 form a helical membrane-spanning segment; sequence IVMAYVFTISNSLQGLFIFLF. Topologically, residues 792–1014 are cytoplasmic; sequence HVVFAEKMRK…NKPSMYCQDL (223 aa). Disordered regions lie at residues 814 to 833 and 932 to 994; these read GSSN…DLMS and YQGW…EVTP. Over residues 941-952 the composition is skewed to pro residues; the sequence is PEFSPPPPPLST. Low complexity predominate over residues 965–986; it reads SGRRPPSSKMSDDSAYSDGSSS.

The protein belongs to the G-protein coupled receptor 2 family. LN-TM7 subfamily. In terms of assembly, monomer and homodimer. In terms of processing, autoproteolytically processed at the GPS region of the GAIN-B domain; this cleavage modulates receptor activity. In terms of tissue distribution, expressed in epidermal precursor cells and pharyngeal primordium. In adults expression is seen in pharyngeal muscle cells and nervous system, the nerve ring, the gonad, and the vulva.

It localises to the cell membrane. In terms of biological role, has a role in the establishment of anterior-posterior polarity in tissues during embryogenesis. Required for the alignment of the mitotic spindles and division planes. May have a role in cell death events. Required for normal defection and oocyte fertilization. Involved in sperm function. Operates in pharyngeal pumping during feeding. This is Latrophilin-like protein 1 from Caenorhabditis elegans.